We begin with the raw amino-acid sequence, 424 residues long: Subtilisin-like protease 2 (424 aa).

The signal sequence occupies residues 1–17 (MQLLNLGLLLLLPFVAG). A propeptide spanning residues 18–123 (EIAPQPEPLR…VHPDQHVYLA (106 aa)) is cleaved from the precursor. In terms of domain architecture, Inhibitor I9 spans 37 to 123 (QYIVTLKEGL…VHPDQHVYLA (87 aa)). The Peptidase S8 domain occupies 132–424 (RWGLGYMSSK…RKFTLPKNTK (293 aa)). Active-site charge relay system residues include Asp170 and His202. Residues Asn249, Asn262, and Asn350 are each glycosylated (N-linked (GlcNAc...) asparagine). Ser359 acts as the Charge relay system in catalysis. An N-linked (GlcNAc...) asparagine glycan is attached at Asn390.

This sequence belongs to the peptidase S8 family.

The protein resides in the secreted. Its function is as follows. Secreted subtilisin-like serine protease with keratinolytic activity that contributes to pathogenicity. This Arthroderma otae (Microsporum canis) protein is Subtilisin-like protease 2 (SUB2).